Here is a 261-residue protein sequence, read N- to C-terminus: Proliferating cell nuclear antigen (261 aa).

Residues K14, K77, and K80 each carry the N6-acetyllysine modification. The DNA-binding element occupies R61–K80. C135 and C162 are joined by a disulfide. Residue K164 forms a Glycyl lysine isopeptide (Lys-Gly) (interchain with G-Cter in SUMO2); alternate linkage. A Glycyl lysine isopeptide (Lys-Gly) (interchain with G-Cter in ubiquitin); alternate cross-link involves residue K164. Position 211 is a phosphotyrosine; by EGFR (Y211). K248 bears the N6-acetyllysine mark. A Glycyl lysine isopeptide (Lys-Gly) (interchain with G-Cter in SUMO2) cross-link involves residue K254.

This sequence belongs to the PCNA family. Homotrimer. Interacts with p300/EP300; the interaction occurs on chromatin in UV-irradiated damaged cells. Interacts with CREBBP (via transactivation domain and C-terminus); the interaction occurs on chromatin in UV-irradiated damaged cells. Directly interacts with POLD1, POLD3 and POLD4 subunits of the DNA polymerase delta complex, POLD3 being the major interacting partner; the interaction with POLD3 is inhibited by CDKN1A/p21(CIP1). Forms a complex with activator 1 heteropentamer in the presence of ATP. Interacts with EXO1, POLH, POLK, DNMT1, ERCC5, FEN1, CDC6 and POLDIP2. Interacts with POLB. Interacts with APEX2; this interaction is triggered by reactive oxygen species and increased by misincorporation of uracil in nuclear DNA. Forms a ternary complex with DNTTIP2 and core histone. Interacts with KCTD10. Interacts with PPP1R15A. Interacts with SMARCA5/SNF2H. Interacts with BAZ1B/WSTF; the interaction is direct and is required for BAZ1B/WSTF binding to replication foci during S phase. Interacts with HLTF and SHPRH. Interacts with NUDT15; this interaction is disrupted in response to UV irradiation and acetylation. Interacts with CDKN1A/p21(CIP1) and CDT1; interacts via their PIP-box which also recruits the DCX(DTL) complex. The interaction with CDKN1A inhibits POLD3 binding. Interacts with DDX11. Interacts with EGFR; positively regulates PCNA. Interacts with PARPBP. Interacts (when ubiquitinated) with SPRTN; leading to enhance RAD18-mediated PCNA ubiquitination. Interacts (when polyubiquitinated) with ZRANB3. Interacts with SMARCAD1. Interacts with CDKN1C. Interacts with PCLAF (via PIP-box). Interacts with RTEL1 (via PIP-box); the interaction is direct and essential for the suppression of telomere fragility. Interacts with FAM111A (via PIP-box); the interaction is direct and required for PCNA loading on chromatin binding. Interacts with LIG1. Interacts with SETMAR. Interacts with ANKRD17. Interacts with FBXO18/FBH1 (via PIP-box); the interaction recruits the DCX(DTL) complex and promotes ubiquitination and degradation of FBXO18/FBH1. Interacts with POLN. Interacts with SDE2 (via PIP-box); the interaction is direct and prevents ultraviolet light induced monoubiquitination. Component of the replisome complex composed of at least DONSON, MCM2, MCM7, PCNA and TICRR; interaction at least with PCNA occurs during DNA replication. Interacts with MAPK15; the interaction is chromatin binding dependent and prevents MDM2-mediated PCNA destruction by inhibiting the association of PCNA with MDM2. Interacts with PARP10 (via PIP-box). Interacts with DDI2. Interacts with HMCES (via PIP-box). Interacts with TRAIP (via PIP-box). Interacts with UHRF2. Interacts with ALKBH2; this interaction is enhanced during the S-phase of the cell cycle. Interacts with ATAD5; the interaction promotes USP1-mediated PCNA deubiquitination. Interacts (when phosphorylated) with GRB2. Interacts with ANG. Interacts with nuclear UNG; this interaction mediates UNG recruitment to S-phase replication foci. Interacts with ERCC6L2 (via an atypical PIP-box); this interaction facilitates cenrtomeric localization of ERCC6L2. In terms of processing, phosphorylated. Phosphorylation at Tyr-211 by EGFR stabilizes chromatin-associated PCNA. Acetylated by CREBBP and p300/EP300; preferentially acetylated by CREBBP on Lys-80, Lys-13 and Lys-14 and on Lys-77 by p300/EP300 upon loading on chromatin in response to UV irradiation. Lysine acetylation disrupts association with chromatin, hence promoting PCNA ubiquitination and proteasomal degradation in response to UV damage in a CREBBP- and EP300-dependent manner. Acetylation disrupts interaction with NUDT15 and promotes degradation. Post-translationally, ubiquitinated. Following DNA damage, can be either monoubiquitinated to stimulate direct bypass of DNA lesions by specialized DNA polymerases or polyubiquitinated to promote recombination-dependent DNA synthesis across DNA lesions by template switching mechanisms. Following induction of replication stress, monoubiquitinated by the UBE2B-RAD18 complex on Lys-164, leading to recruit translesion (TLS) polymerases, which are able to synthesize across DNA lesions in a potentially error-prone manner. An error-free pathway also exists and requires non-canonical polyubiquitination on Lys-164 through 'Lys-63' linkage of ubiquitin moieties by the E2 complex UBE2N-UBE2V2 and the E3 ligases, HLTF, RNF8 and SHPRH. This error-free pathway, also known as template switching, employs recombination mechanisms to synthesize across the lesion, using as a template the undamaged, newly synthesized strand of the sister chromatid. Monoubiquitination at Lys-164 also takes place in undamaged proliferating cells, and is mediated by the DCX(DTL) complex, leading to enhance PCNA-dependent translesion DNA synthesis. Sumoylated during S phase. In terms of processing, methylated on glutamate residues by ARMT1.

It localises to the nucleus. Auxiliary protein of DNA polymerase delta and epsilon, is involved in the control of eukaryotic DNA replication by increasing the polymerase's processibility during elongation of the leading strand. Induces a robust stimulatory effect on the 3'-5' exonuclease and 3'-phosphodiesterase, but not apurinic-apyrimidinic (AP) endonuclease, APEX2 activities. Has to be loaded onto DNA in order to be able to stimulate APEX2. Plays a key role in DNA damage response (DDR) by being conveniently positioned at the replication fork to coordinate DNA replication with DNA repair and DNA damage tolerance pathways. Acts as a loading platform to recruit DDR proteins that allow completion of DNA replication after DNA damage and promote postreplication repair: Monoubiquitinated PCNA leads to recruitment of translesion (TLS) polymerases, while 'Lys-63'-linked polyubiquitination of PCNA is involved in error-free pathway and employs recombination mechanisms to synthesize across the lesion. This Mus musculus (Mouse) protein is Proliferating cell nuclear antigen (Pcna).